Here is a 438-residue protein sequence, read N- to C-terminus: Acid phosphatase type 7 (438 aa).

The first 26 residues, 1–26, serve as a signal peptide directing secretion; that stretch reads MHPLPGYWSCYCLLLLFSLGVQGSLG. The Fe cation site is built by aspartate 141, aspartate 170, and tyrosine 173. Aspartate 170 is a Zn(2+) binding site. Asparagine 205 provides a ligand contact to Zn(2+). The N-linked (GlcNAc...) asparagine glycan is linked to asparagine 211. 2 residues coordinate Zn(2+): histidine 286 and histidine 333. Histidine 335 lines the Fe cation pocket. 2 N-linked (GlcNAc...) asparagine glycosylation sites follow: asparagine 350 and asparagine 404.

This sequence belongs to the metallophosphoesterase superfamily. Purple acid phosphatase family. Fe cation is required as a cofactor. The cofactor is Zn(2+).

Its subcellular location is the secreted. It catalyses the reaction a phosphate monoester + H2O = an alcohol + phosphate. This is Acid phosphatase type 7 from Homo sapiens (Human).